The sequence spans 1030 residues: Halotolerance protein 9 (1030 aa).

The zn(2)-C6 fungal-type DNA-binding region spans 136-166 (CDHCRKRKIRCDEVDQQTKKCSNCIKFQLPC). Positions 185–208 (HHATPGESLQTSNSISNPVASSSV) are disordered. Positions 196–208 (SNSISNPVASSSV) are enriched in low complexity. A phosphoserine mark is found at serine 221 and serine 937.

The protein resides in the cytoplasm. Its subcellular location is the nucleus. Its function is as follows. Putative transcription factor involved in halotolerance. The protein is Halotolerance protein 9 (HAL9) of Saccharomyces cerevisiae (strain ATCC 204508 / S288c) (Baker's yeast).